The sequence spans 130 residues: Small ribosomal subunit protein uS9 (130 aa).

The tract at residues T105–R130 is disordered. The span at R106–K115 shows a compositional bias: basic and acidic residues. The segment covering P116–R130 has biased composition (basic residues).

This sequence belongs to the universal ribosomal protein uS9 family.

The polypeptide is Small ribosomal subunit protein uS9 (Oenococcus oeni (strain ATCC BAA-331 / PSU-1)).